Reading from the N-terminus, the 889-residue chain is MKNPFAHLAEPLDAAQPGKRFFNLNKLEDSRYGRLPFSIRVLLEAAVRNCDEFLVKKNDIENILNWNVMQHKNIEVPFKPARVILQDFTGVPAVVDFAAMRDAVKKLGGNPEKINPVCPADLVIDHSIQVDFNRRADSLQKNQDLEFERNKERFEFLKWGSQAFCNMRIIPPGSGIIHQVNLEYLARVVFDQDGCYYPDSLVGTDSHTTMIDGLGVLGWGVGGIEAEAVMLGQPISMVLPQVIGYKLMGKPHPLVTSTDIVLTITKHLRQVGVVGKFVEFFGPGVAQLSIADRATIANMCPEYGATAAFFPVDEVSIAYLLQTGREEDKVKHIQKYLQAVGMFRDFNDTSQDPDFTQVVELDLKTVVPCCSGPKRPQDKVAVSEMKKDFESCLGAKQGFKGFQVAPDRHNDRKTFLYSNSEFTLAHGSVVIAAITSCTNTSNPSVMLGAGLLAKKAVEAGLSVKPYIKTSLSPGSGVVTYYLRESGVMPYLSQLGFDVVGYGCMTCIGNSGPLPEPVVEAITQGDLVAVGVLSGNRNFEGRVHPNTRANYLASPPLVIAYAIAGTVRIDFEKEPLGVNAQGRQVFLKDIWPTRDEIQAVERQHVIPGMFKEVYQKIETVNKSWNALAAPSEKLYAWNPKSTYIKSPPFFESLTLDLQPPKSIVDAYVLLNLGDSVTTDHISPAGNIARNSPAARYLTNRGLTPREFNSYGSRRGNDAIMARGTFANIRLLNKFLNKQAPQTVHLPSGETLDVFDAAERYQQAGLPLIVLAGKEYGSGSSRDWAAKGPFLLGIKAVLAESYERIHRSNLVGMGVIPLEYLPGETADSLGLTGRERYTINIPEDLKPRMTVQIKLDTGKTFQAVMRFDTDVELTYFHNGGILNYMIRKMAQ.

Substrate is bound by residues glutamine 86 and 205–207 (DSH). [4Fe-4S] cluster-binding residues include cysteine 437, cysteine 503, and cysteine 506. Substrate is bound by residues arginine 536, arginine 541, arginine 699, and 779–780 (SR).

This sequence belongs to the aconitase/IPM isomerase family. In terms of assembly, interacts (when associated with the 4Fe-4S) with FBXL5. Interacts with frataxin(81-210). [4Fe-4S] cluster serves as cofactor.

It is found in the cytoplasm. The protein resides in the cytosol. It carries out the reaction citrate = D-threo-isocitrate. Its function is as follows. Bifunctional iron sensor that switches between 2 activities depending on iron availability. Iron deprivation, promotes its mRNA binding activity through which it regulates the expression of genes involved in iron uptake, sequestration and utilization. Binds to iron-responsive elements (IRES) in the untranslated region of target mRNAs preventing for instance the translation of ferritin and aminolevulinic acid synthase and stabilizing the transferrin receptor mRNA. Functionally, conversely, when cellular iron levels are high, binds a 4Fe-4S cluster which precludes RNA binding activity and promotes the aconitase activity, the isomerization of citrate to isocitrate via cis-aconitate. The chain is Cytoplasmic aconitate hydratase (Aco1) from Mus musculus (Mouse).